The following is a 103-amino-acid chain: MYAVIKTGGKQYRVAAGEKIKVEQIPADVGSEITIDQVLMVGEGESVKIGTPVVSGAAVKATVVSHGRHDKVKIFKMRRRKHYQKHQGHRQNYTELRIEAISA.

It belongs to the bacterial ribosomal protein bL21 family. In terms of assembly, part of the 50S ribosomal subunit. Contacts protein L20.

In terms of biological role, this protein binds to 23S rRNA in the presence of protein L20. The polypeptide is Large ribosomal subunit protein bL21 (Azoarcus sp. (strain BH72)).